We begin with the raw amino-acid sequence, 113 residues long: UPF0122 protein MCAP_0480 (113 aa).

The protein belongs to the UPF0122 family.

Might take part in the signal recognition particle (SRP) pathway. This is inferred from the conservation of its genetic proximity to ftsY/ffh. May be a regulatory protein. This is UPF0122 protein MCAP_0480 from Mycoplasma capricolum subsp. capricolum (strain California kid / ATCC 27343 / NCTC 10154).